A 175-amino-acid chain; its full sequence is Probable coatomer subunit zeta-A (175 aa).

This sequence belongs to the adaptor complexes small subunit family. Oligomeric complex that consists of at least the alpha, beta, beta', gamma, delta, epsilon and zeta subunits.

The protein resides in the cytoplasm. It localises to the golgi apparatus membrane. It is found in the cytoplasmic vesicle. Its subcellular location is the COPI-coated vesicle membrane. Its function is as follows. The coatomer is a cytosolic protein complex that binds to dilysine motifs and reversibly associates with Golgi non-clathrin-coated vesicles, which further mediate biosynthetic protein transport from the ER, via the Golgi up to the trans Golgi network. Coatomer complex is required for budding from Golgi membranes, and is essential for the retrograde Golgi-to-ER transport of dilysine-tagged proteins. The zeta subunit may be involved in regulating the coat assembly and, hence, the rate of biosynthetic protein transport due to its association-dissociation properties with the coatomer complex. The protein is Probable coatomer subunit zeta-A (copZa) of Dictyostelium discoideum (Social amoeba).